Here is a 326-residue protein sequence, read N- to C-terminus: tRNA-modifying protein YgfZ (326 aa).

Folate contacts are provided by tryptophan 27 and tryptophan 189.

This sequence belongs to the tRNA-modifying YgfZ family.

It localises to the cytoplasm. Folate-binding protein involved in regulating the level of ATP-DnaA and in the modification of some tRNAs. It is probably a key factor in regulatory networks that act via tRNA modification, such as initiation of chromosomal replication. The sequence is that of tRNA-modifying protein YgfZ from Escherichia coli O127:H6 (strain E2348/69 / EPEC).